A 36-amino-acid chain; its full sequence is Cytochrome b6-f complex subunit 5 (36 aa).

Residues 5 to 25 form a helical membrane-spanning segment; it reads LLAGIVLGLVPVTLAGLFVAA.

Belongs to the PetG family. In terms of assembly, the 4 large subunits of the cytochrome b6-f complex are cytochrome b6, subunit IV (17 kDa polypeptide, PetD), cytochrome f and the Rieske protein, while the 4 small subunits are PetG, PetL, PetM and PetN. The complex functions as a dimer.

It is found in the cellular thylakoid membrane. Its function is as follows. Component of the cytochrome b6-f complex, which mediates electron transfer between photosystem II (PSII) and photosystem I (PSI), cyclic electron flow around PSI, and state transitions. PetG is required for either the stability or assembly of the cytochrome b6-f complex. This Acaryochloris marina (strain MBIC 11017) protein is Cytochrome b6-f complex subunit 5.